A 174-amino-acid polypeptide reads, in one-letter code: Ribulose bisphosphate carboxylase small subunit, chloroplastic (174 aa).

A chloroplast-targeting transit peptide spans 1-45; it reads MAPTVMASSATSVAPFQGLKSTAGLPVSRRSNASSASVSNGGRIR.

It belongs to the RuBisCO small chain family. Heterohexadecamer of 8 large and 8 small subunits.

The protein localises to the plastid. The protein resides in the chloroplast. Its function is as follows. RuBisCO catalyzes two reactions: the carboxylation of D-ribulose 1,5-bisphosphate, the primary event in carbon dioxide fixation, as well as the oxidative fragmentation of the pentose substrate. Both reactions occur simultaneously and in competition at the same active site. Although the small subunit is not catalytic it is essential for maximal activity. This chain is Ribulose bisphosphate carboxylase small subunit, chloroplastic, found in Hordeum vulgare (Barley).